A 210-amino-acid chain; its full sequence is Thymidylate kinase (210 aa).

Gly-10–Ser-17 lines the ATP pocket.

This sequence belongs to the thymidylate kinase family.

The enzyme catalyses dTMP + ATP = dTDP + ADP. Phosphorylation of dTMP to form dTDP in both de novo and salvage pathways of dTTP synthesis. The polypeptide is Thymidylate kinase (Pseudomonas syringae pv. tomato (strain ATCC BAA-871 / DC3000)).